The sequence spans 955 residues: 26S proteasome non-ATPase regulatory subunit 1 (955 aa).

The tract at residues 279-313 (PGSTNTGTVPGSEKDSDAMEAEEKPGSTCVGKSAE) is disordered. Residues 290 to 303 (SEKDSDAMEAEEKP) are compositionally biased toward basic and acidic residues. PC repeat units follow at residues 403-436 (TATA…PGSA), 441-474 (GGLY…DIVR), 476-510 (GGSL…VTGE), 511-545 (AAGL…EKIL), 547-580 (GLAV…ILRR), 581-616 (SGMY…DVRR), 617-649 (AAVE…PHVR), 651-685 (GAAM…YVRQ), 686-726 (GALI…DVMA), and 729-761 (GAIL…PSVV). 2 disordered regions span residues 839-879 (AKKK…NFQL) and 932-955 (AHGP…YIDD). 2 stretches are compositionally biased toward basic and acidic residues: residues 842 to 854 (KEKE…KEEE) and 861 to 874 (TEKK…KEPE). Residues 938 to 955 (EEEEQEPEPPEPFEYIDD) are compositionally biased toward acidic residues.

Belongs to the proteasome subunit S1 family. As to quaternary structure, component of the 19S proteasome regulatory particle complex. The 26S proteasome consists of a 20S core particle (CP) and two 19S regulatory subunits (RP). The regulatory particle is made of a lid composed of 9 subunits, a base containing 6 ATPases and few additional components including PSMD1. Interacts with ADRM1.

Its function is as follows. Component of the 26S proteasome, a multiprotein complex involved in the ATP-dependent degradation of ubiquitinated proteins. This complex plays a key role in the maintenance of protein homeostasis by removing misfolded or damaged proteins, which could impair cellular functions, and by removing proteins whose functions are no longer required. Therefore, the proteasome participates in numerous cellular processes, including cell cycle progression, apoptosis, or DNA damage repair. In Gallus gallus (Chicken), this protein is 26S proteasome non-ATPase regulatory subunit 1 (PSMD1).